The sequence spans 123 residues: Large ribosomal subunit protein bL12 (123 aa).

It belongs to the bacterial ribosomal protein bL12 family. Homodimer. Part of the ribosomal stalk of the 50S ribosomal subunit. Forms a multimeric L10(L12)X complex, where L10 forms an elongated spine to which 2 to 4 L12 dimers bind in a sequential fashion. Binds GTP-bound translation factors.

Functionally, forms part of the ribosomal stalk which helps the ribosome interact with GTP-bound translation factors. Is thus essential for accurate translation. This Geobacillus thermodenitrificans (strain NG80-2) protein is Large ribosomal subunit protein bL12.